The sequence spans 720 residues: Heat shock protein homolog pss1 (720 aa).

At Ser38 the chain carries Phosphoserine. A Phosphothreonine modification is found at Thr39. The span at 658–690 (KRQKVQAEREAAKAATKSEAEKQKPSGKFEEGT) shows a compositional bias: basic and acidic residues. The interval 658–720 (KRQKVQAERE…ETMEIDEQKE (63 aa)) is disordered. The segment covering 703–720 (VAPENEEVETMEIDEQKE) has biased composition (acidic residues).

Belongs to the heat shock protein 70 family.

The protein resides in the cytoplasm. Required for normal growth at various temperatures. The chain is Heat shock protein homolog pss1 (pss1) from Schizosaccharomyces pombe (strain 972 / ATCC 24843) (Fission yeast).